The following is a 955-amino-acid chain: MTRKNTTTNPWAKFHGPNLGYVIEQYDLYVTGAGSVDPELQELFEIFGAPSFQDDVVTGDNTATHFSPQNTGNIEKILKVVQLVEQIRSFGHTLAHINPMEDAANGQSLLEKAMNELSDADLKAIPAKTVWQDAPEGIHTALDVIHRLKEVYTQSLAYEFSHIQDSEERAWLHQMVESNSLRQPLSNKKRTALLKRLTAVEGFEQFLHKTFVGQKRFSIEGVDMLVPVLDEIVLEGAKNGVEDVMIGMAHRGRLSVLAHVLEKPYSHMFAEFKHAKIEGAVANSGWTGDVKYHLGREQVVSNEEVSTRVTLANNPSHLEFVNPVVEGFARAAQENRKKSGLPEQDTSKSFVILVHGDAAFPGQGIVSETLNLSRLNAYQTGGTIHVIANNAVGFTTDSYDSRSTKYSSDLAKGFDIPIVHVNADDPEACLAAANLAIQYRMLFKKDFLIDLIGYRRYGHNEMDDPAVTQPQVYKKIKNHPTVRAIYADQLQAAGVLNADEIETITQFTQEQLKSDYAQVPPADTSDATIHVKVPDVVAKGIQPIDTGVELDSLRAINEGLLSWPEGFNVYPKVKKILERRKDALEENGKIEWALAESLAFASILQEGTPIRLTGQDSQRGTFAHRHIVLHDTDTNETYSPLHRLPNINASFSVHNSPLSEAAVVGYEYGYNVFAPETLVMWEAQYGDFSNTAQALFDQYVSAGRAKWGQKSGLVLLLPHGYEGQGPEHSSARPERFLQLAAENNWTVANLTSAAQYFHILRRQASILGTEAVRPLVLMTPKSLLRHPLTLSTANQLSEGRFQPALEQENLGTKPNKVKRLVLSTGKMAIDLAAEIESGRHEYNLDEIHIVRIEQLYPFPAEKVQSIIKRFKNLEEIIWVQEEPRNMGAWHYMAPILFELAGDKVKTGYIGRPDRSSPSGGDPFAHKAEQELIVSHALDVKYNFRQDKLEIEVFSN.

This sequence belongs to the alpha-ketoglutarate dehydrogenase family. Homodimer. Part of the 2-oxoglutarate dehydrogenase (OGDH) complex composed of E1 (2-oxoglutarate dehydrogenase), E2 (dihydrolipoamide succinyltransferase) and E3 (dihydrolipoamide dehydrogenase); the complex contains multiple copies of the three enzymatic components (E1, E2 and E3). The cofactor is thiamine diphosphate.

It carries out the reaction N(6)-[(R)-lipoyl]-L-lysyl-[protein] + 2-oxoglutarate + H(+) = N(6)-[(R)-S(8)-succinyldihydrolipoyl]-L-lysyl-[protein] + CO2. E1 component of the 2-oxoglutarate dehydrogenase (OGDH) complex which catalyzes the decarboxylation of 2-oxoglutarate, the first step in the conversion of 2-oxoglutarate to succinyl-CoA and CO(2). The sequence is that of 2-oxoglutarate dehydrogenase E1 component from Bacillus anthracis (strain A0248).